Consider the following 129-residue polypeptide: Phosphoribosyl-AMP cyclohydrolase (129 aa).

Residue Asp76 coordinates Mg(2+). Cys77 lines the Zn(2+) pocket. Residues Asp78 and Asp80 each contribute to the Mg(2+) site. Zn(2+) contacts are provided by Cys97 and Cys104.

This sequence belongs to the PRA-CH family. Homodimer. It depends on Mg(2+) as a cofactor. Zn(2+) serves as cofactor.

The protein resides in the cytoplasm. The catalysed reaction is 1-(5-phospho-beta-D-ribosyl)-5'-AMP + H2O = 1-(5-phospho-beta-D-ribosyl)-5-[(5-phospho-beta-D-ribosylamino)methylideneamino]imidazole-4-carboxamide. Its pathway is amino-acid biosynthesis; L-histidine biosynthesis; L-histidine from 5-phospho-alpha-D-ribose 1-diphosphate: step 3/9. In terms of biological role, catalyzes the hydrolysis of the adenine ring of phosphoribosyl-AMP. This is Phosphoribosyl-AMP cyclohydrolase from Leptothrix cholodnii (strain ATCC 51168 / LMG 8142 / SP-6) (Leptothrix discophora (strain SP-6)).